Consider the following 283-residue polypeptide: Acetylglutamate kinase (283 aa).

Residues Gly-64 to Gly-65, Arg-86, and Asn-179 contribute to the substrate site.

Belongs to the acetylglutamate kinase family. ArgB subfamily.

Its subcellular location is the cytoplasm. It carries out the reaction N-acetyl-L-glutamate + ATP = N-acetyl-L-glutamyl 5-phosphate + ADP. The protein operates within amino-acid biosynthesis; L-arginine biosynthesis; N(2)-acetyl-L-ornithine from L-glutamate: step 2/4. Catalyzes the ATP-dependent phosphorylation of N-acetyl-L-glutamate. The chain is Acetylglutamate kinase from Campylobacter hominis (strain ATCC BAA-381 / DSM 21671 / CCUG 45161 / LMG 19568 / NCTC 13146 / CH001A).